Here is a 241-residue protein sequence, read N- to C-terminus: Large ribosomal subunit protein uL30 (241 aa).

Residues 1 to 25 (MASTLKPETLVKKSKAQQKTAEERA) form a disordered region.

The protein belongs to the universal ribosomal protein uL30 family.

This chain is Large ribosomal subunit protein uL30 (RPL7), found in Debaryomyces hansenii (strain ATCC 36239 / CBS 767 / BCRC 21394 / JCM 1990 / NBRC 0083 / IGC 2968) (Yeast).